The primary structure comprises 133 residues: Large ribosomal subunit protein eL14 (133 aa).

The protein belongs to the eukaryotic ribosomal protein eL14 family.

The sequence is that of Large ribosomal subunit protein eL14 (RPL14) from Griffithsia japonica (Red alga).